Here is a 306-residue protein sequence, read N- to C-terminus: Ribonuclease Z (306 aa).

Zn(2+)-binding residues include histidine 63, histidine 65, aspartate 67, histidine 68, histidine 141, aspartate 211, and histidine 269. The Proton acceptor role is filled by aspartate 67.

It belongs to the RNase Z family. Homodimer. Requires Zn(2+) as cofactor.

The catalysed reaction is Endonucleolytic cleavage of RNA, removing extra 3' nucleotides from tRNA precursor, generating 3' termini of tRNAs. A 3'-hydroxy group is left at the tRNA terminus and a 5'-phosphoryl group is left at the trailer molecule.. Zinc phosphodiesterase, which displays some tRNA 3'-processing endonuclease activity. Probably involved in tRNA maturation, by removing a 3'-trailer from precursor tRNA. In Staphylococcus epidermidis (strain ATCC 35984 / DSM 28319 / BCRC 17069 / CCUG 31568 / BM 3577 / RP62A), this protein is Ribonuclease Z.